A 156-amino-acid chain; its full sequence is ATP synthase subunit b (156 aa).

The chain crosses the membrane as a helical span at residues 5 to 25; sequence LTMIGQAIAFFIFVVFCMKYV.

This sequence belongs to the ATPase B chain family. F-type ATPases have 2 components, F(1) - the catalytic core - and F(0) - the membrane proton channel. F(1) has five subunits: alpha(3), beta(3), gamma(1), delta(1), epsilon(1). F(0) has three main subunits: a(1), b(2) and c(10-14). The alpha and beta chains form an alternating ring which encloses part of the gamma chain. F(1) is attached to F(0) by a central stalk formed by the gamma and epsilon chains, while a peripheral stalk is formed by the delta and b chains.

The protein resides in the cell inner membrane. Its function is as follows. F(1)F(0) ATP synthase produces ATP from ADP in the presence of a proton or sodium gradient. F-type ATPases consist of two structural domains, F(1) containing the extramembraneous catalytic core and F(0) containing the membrane proton channel, linked together by a central stalk and a peripheral stalk. During catalysis, ATP synthesis in the catalytic domain of F(1) is coupled via a rotary mechanism of the central stalk subunits to proton translocation. In terms of biological role, component of the F(0) channel, it forms part of the peripheral stalk, linking F(1) to F(0). The protein is ATP synthase subunit b of Hahella chejuensis (strain KCTC 2396).